A 290-amino-acid polypeptide reads, in one-letter code: 33 kDa chaperonin (290 aa).

2 cysteine pairs are disulfide-bonded: Cys-235-Cys-237 and Cys-268-Cys-271.

The protein belongs to the HSP33 family. Post-translationally, under oxidizing conditions two disulfide bonds are formed involving the reactive cysteines. Under reducing conditions zinc is bound to the reactive cysteines and the protein is inactive.

The protein localises to the cytoplasm. In terms of biological role, redox regulated molecular chaperone. Protects both thermally unfolding and oxidatively damaged proteins from irreversible aggregation. Plays an important role in the bacterial defense system toward oxidative stress. This is 33 kDa chaperonin from Streptococcus mutans serotype c (strain ATCC 700610 / UA159).